A 605-amino-acid polypeptide reads, in one-letter code: F-box/WD repeat-containing protein 1A (605 aa).

The interval 128–177 (ASYEKEKELCVKYFEQWSESDQVEFVEHLISQMCHYQHGHINSYLKPMLQ) is homodimerization domain D. One can recognise an F-box domain in the interval 190-228 (DHIAENILSYLDAKSLCAAELVCKEWYRVTSDGMLWKKL). Residues 190–228 (DHIAENILSYLDAKSLCAAELVCKEWYRVTSDGMLWKKL) form a required for down-regulation of SNAI1 region. WD repeat units lie at residues 301–338 (ETSK…CKRI), 341–378 (GHTG…MLNT), 381–418 (HHCE…DITL), 424–461 (GHRA…FVRT), 464–503 (GHKR…RVLE), 505–541 (HEEL…DPRA), and 553–590 (EHSG…AAQA).

As to quaternary structure, homodimer. Self-associates. Component of the SCF(BTRC) complex formed of CUL1, SKP1, RBX1 and a BTRC dimer. Direct interaction with SKP1 occurs via the F-box domain. Interacts with phosphorylated ubiquitination substrates SMAD3 and SMAD4. Interacts with phosphorylated ubiquitination substrates CTNNB1, NFKBIA, NFKBIB, NFKBIE, NFKB1/nuclear factor NF-kappa-B p105 subunit, ATF4, CDC25A, DLG1, FBXO5 and SNAI1; the interaction requires the phosphorylation of the 2 serine residues in the substrate destruction motif D-S-G-X(2,3,4)-S. Binds UBQLN1. Interacts with CDC34 and UBE2R2. Interacts with FBXW11. Interacts with CUL4A and DDB1. Part of a SCF(BTRC)-like complex lacking CUL1, which is associated with phosphorylated NKBIA and RELA; RELA interacts directly with NFKBIA. Interacts with the phosphorylated form of GLI3. Interacts with CLU. Interacts with PER1 (phosphorylated), PER2 (phosphorylated) and PER3. Interacts with phosphorylated ubiquitination substrate CEP68. Interacts with ZC3H12A; this interaction occurs when ZC3H12A is phosphorylated in a IKBKB/IKKB-dependent manner. Interacts with HSF1; this interaction occurs during mitosis and induces HSF1 ubiquitin-dependent degradation, a process inhibited by CDC20. Interacts with NFE2L1. Interacts with INAVA. Interacts with IL10RA; this interaction leads to IL10RA ubiquitination and subsequent degradation. Interacts with REST. Interacts with KLF4; this interaction leads to KLF4 ubiquitination and subsequent degradation. Interacts with UBR2, as part of a SCF(BTRC) complex; the interaction mediates 'Lys-48'-linked ubiquitination of UBR2 and is regulated by DUSP22 in the T-cell receptor signaling pathway. (Microbial infection) Interacts with vaccinia virus A49; this interaction inhibits NF-kappa-B activation. In terms of assembly, (Microbial infection) Interacts with HIV-1 Vpu. Ubiquitinated. Deubiquitinated by OTUD5, promoting its stability. Expressed in epididymis (at protein level).

The protein resides in the cytoplasm. Its subcellular location is the nucleus. The protein operates within protein modification; protein ubiquitination. In terms of biological role, substrate recognition component of a SCF (SKP1-CUL1-F-box protein) E3 ubiquitin-protein ligase complex which mediates the ubiquitination and subsequent proteasomal degradation of target proteins. Recognizes and binds to phosphorylated target proteins. SCF(BTRC) mediates the ubiquitination of CTNNB1 and participates in Wnt signaling. SCF(BTRC) mediates the ubiquitination of phosphorylated NFKB1, ATF4, CDC25A, DLG1, FBXO5, PER1, SMAD3, SMAD4, SNAI1 and probably NFKB2. SCF(BTRC) mediates the ubiquitination of NFKBIA, NFKBIB and NFKBIE; the degradation frees the associated NFKB1 to translocate into the nucleus and to activate transcription. Ubiquitination of NFKBIA occurs at 'Lys-21' and 'Lys-22'. The SCF(FBXW11) complex also regulates NF-kappa-B by mediating ubiquitination of phosphorylated NFKB1: specifically ubiquitinates the p105 form of NFKB1, leading to its degradation. SCF(BTRC) mediates the ubiquitination of CEP68; this is required for centriole separation during mitosis. SCF(BTRC) mediates the ubiquitination and subsequent degradation of nuclear NFE2L1. Has an essential role in the control of the clock-dependent transcription via degradation of phosphorylated PER1 and PER2. May be involved in ubiquitination and subsequent proteasomal degradation through a DBB1-CUL4 E3 ubiquitin-protein ligase. Required for activation of NFKB-mediated transcription by IL1B, MAP3K14, MAP3K1, IKBKB and TNF. Required for proteolytic processing of GLI3. Mediates ubiquitination of REST, thereby leading to its proteasomal degradation. SCF(BTRC) mediates the ubiquitination and subsequent proteasomal degradation of KLF4; thereby negatively regulating cell pluripotency maintenance and embryogenesis. SCF(BTRC) acts as a regulator of mTORC1 signaling pathway by catalyzing ubiquitination and subsequent proteasomal degradation of phosphorylated DEPTOR, TFE3 and MITF. SCF(BTRC) directs 'Lys-48'-linked ubiquitination of UBR2 in the T-cell receptor signaling pathway. The chain is F-box/WD repeat-containing protein 1A (BTRC) from Homo sapiens (Human).